Here is a 100-residue protein sequence, read N- to C-terminus: Small ribosomal subunit protein uS14c (100 aa).

The protein belongs to the universal ribosomal protein uS14 family. Part of the 30S ribosomal subunit.

The protein localises to the plastid. It is found in the chloroplast. Binds 16S rRNA, required for the assembly of 30S particles. The sequence is that of Small ribosomal subunit protein uS14c from Oedogonium cardiacum (Filamentous green alga).